A 404-amino-acid chain; its full sequence is MADKVLKEKRKLFIRSMGEGTINGLLDELLQTRVLNKEEMEKVKRENATVMDKTRALIDSVIPKGAQACQICITYICEEDSYLAGTLGLSADQTSGNYLNMQDSQGVLSSFPAPQAVQDNPAMPTSSGSEGNVKLCSLEEAQRIWKQKSAEIYPIMDKSSRTRLALIICNEEFDSIPRRTGAEVDITGMTMLLQNLGYSVDVKKNLTASDMTTELEAFAHRPEHKTSDSTFLVFMSHGIREGICGKKHSEQVPDILQLNAIFNMLNTKNCPSLKDKPKVIIIQACRGDSPGVVWFKDSVGVSGNLSLPTTEEFEDDAIKKAHIEKDFIAFCSSTPDNVSWRHPTMGSVFIGRLIEHMQEYACSCDVEEIFRKVRFSFEQPDGRAQMPTTERVTLTRCFYLFPGH.

Positions 1–91 (MADKVLKEKR…YLAGTLGLSA (91 aa)) constitute a CARD domain. Positions 1 to 119 (MADKVLKEKR…SFPAPQAVQD (119 aa)) are excised as a propeptide. Residue lysine 134 forms a Glycyl lysine isopeptide (Lys-Gly) (interchain with G-Cter in ubiquitin) linkage. Residues histidine 237 and cysteine 285 contribute to the active site. The propeptide at 298–316 (SVGVSGNLSLPTTEEFEDD) is interdomain linker. At serine 302 the chain carries Phosphoserine.

This sequence belongs to the peptidase C14A family. As to quaternary structure, heterotetramer that consists of two anti-parallel arranged heterodimers, each one formed by a 20 kDa (Caspase-1 subunit p20) and a 10 kDa (Caspase-1 subunit p10) subunit. May be a component of the inflammasome, a protein complex which also includes PYCARD, CARD8 and NLRP2 and whose function would be the activation of pro-inflammatory caspases. Component of the AIM2 PANoptosome complex, a multiprotein complex that drives inflammatory cell death (PANoptosis). Interacts with CARD8; interacts with the released C-terminus of CARD8 which forms an inflammasome and directly activates CASP1 to promote pyroptosis. Both the p10 and p20 subunits interact with MEFV. Interacts with CARD17P/INCA and CARD18. Interacts with SERPINB1; this interaction regulates CASP1 activity. In terms of assembly, heterotetramer that consists of two anti-parallel arranged heterodimers, each one formed by a 20 kDa (Caspase-1 subunit p20) and a 10 kDa (Caspase-1 subunit p10) subunit. Can form a heterodimer with isoform epsilon which then has an inhibitory effect. Heterotetramer that consists of two anti-parallel arranged heterodimers, each one formed by a 20 kDa (Caspase-1 subunit p20) and a 10 kDa (Caspase-1 subunit p10) subunit. As to quaternary structure, can form a heterodimer with Caspase-1 subunit p20 which then has an inhibitory effect. Post-translationally, the two subunits are derived from the precursor sequence by an autocatalytic mechanism. In terms of processing, ubiquitinated via 'Lys-11'-linked polyubiquitination. Deubiquitinated by USP8. Cleavage in the interdomain linker region is required to induce pyroptosis. As to expression, expressed in larger amounts in spleen and lung. Detected in liver, heart, small intestine, colon, thymus, prostate, skeletal muscle, peripheral blood leukocytes, kidney and testis. No expression in the brain.

It localises to the cytoplasm. The protein resides in the cell membrane. The catalysed reaction is Strict requirement for an Asp residue at position P1 and has a preferred cleavage sequence of Tyr-Val-Ala-Asp-|-.. Its activity is regulated as follows. (Microbial infection) Specifically inhibited by the cowpox virus Crma protein. In terms of biological role, thiol protease involved in a variety of inflammatory processes by proteolytically cleaving other proteins, such as the precursors of the inflammatory cytokines interleukin-1 beta (IL1B) and interleukin 18 (IL18) as well as the pyroptosis inducer Gasdermin-D (GSDMD), into active mature peptides. Plays a key role in cell immunity as an inflammatory response initiator: once activated through formation of an inflammasome complex, it initiates a pro-inflammatory response through the cleavage of the two inflammatory cytokines IL1B and IL18, releasing the mature cytokines which are involved in a variety of inflammatory processes. Cleaves a tetrapeptide after an Asp residue at position P1. Also initiates pyroptosis, a programmed lytic cell death pathway, through cleavage of GSDMD. In contrast to cleavage of interleukin IL1B, recognition and cleavage of GSDMD is not strictly dependent on the consensus cleavage site but depends on an exosite interface on CASP1 that recognizes and binds the Gasdermin-D, C-terminal (GSDMD-CT) part. Cleaves and activates CASP7 in response to bacterial infection, promoting plasma membrane repair. Upon inflammasome activation, during DNA virus infection but not RNA virus challenge, controls antiviral immunity through the cleavage of CGAS, rendering it inactive. In apoptotic cells, cleaves SPHK2 which is released from cells and remains enzymatically active extracellularly. Its function is as follows. Apoptosis inactive. This Homo sapiens (Human) protein is Caspase-1 (CASP1).